A 1996-amino-acid polypeptide reads, in one-letter code: MDVAAQHVFLFGDQADAPMPMVRRVVERSRHSKNLESFLQSAIDNVQLEVARLTPAERDTIGPFHSLEGLADSLKEKSDRHGIAQMVSVFIARIGELILHAENDPALLDSSTPLLSLGICGGLLPAAAVAAATNIHELIEVASYLARVNCRVAVAISRRSIEIESGPGSWAFSVLGSAVAQLPDILEDFHREQSIPRHRRAWIAVSTPTWATVFGPPSVLSKLRETSITLKKSDAAELPAFGAVHAAHLVAPNFGDLVGESPLLNRPLKTGYKLLSGSKYAPYNATTLKDLLPQIMLDIFQNETNPARVFDVGGSYLRKGGPISLYMLGATSYLVLLRRSLHTQKFEVNLKTNPPSLQNSELRGGSGSVAVIGMSGQFPGAASVDELWDVLMRREERHRKIPIERFNADDYLDETGRGSSAITTAYGCFLENPGLFDHKMFNVSPREAMQMDPGQRLLLHGVYTALEDAGLVTGSSTAADNKRISTYIGDGSDDWRDLQSQHGVDKYIVQGTQRSFTPGRINHHFKWEGATWLVDAACGSTASAVGLAYRALINRDCDTAVAGGANIIATPFWHSALSKGGFLSKTGGCKTFRADADGYCRGEAVGVVVLKRLEDALQDNDNIVSVIRGYSRNHSADTVSITRPHVPAQMRAYQAVLHNSGLEPEDISYVEMHGTGTTAGDSAELESIVNVLAQKNTRETPLVVGAIKANLGHSEAASGISSLIKASLTFRKGMVPPQVGIPEKMGSFACLDHGTVHVPGAPVSFTRESVGKTRAMVMNNFDAAGGNSCFVLEEPPTPSLKSADPRPYHVVTVSAHCQTSLEENKRQLLQFLTENKETSLADLSYTTTARRMHHTLRSAYTGGSIQDIINSLGRDLGKNHGQDKPGAPRVAFAFTGQGAHYAGMGADLFKVSQPFRTTITGLQKICVTHGFPQFAHLISDPSTPMENVSTAQIHLSLAALEIALVDLWKILGISPDLVIGHSIGEYAALYAAGVLSATDAMYLVGTRAMLLQDSLEEGVNGMLSISGTPQDVAAIVSDESVMADCEVACHNSPGMVVLGGRRPRLAELEELLRARKFKCKLLDVPYAMHSSQLDTILPGFRKAARGVCFGTPTIKVISTLTGTEQQHFDSEYLVRQTRESVKYTQAISHCLSQGLVDSATLWLEIGPGPVCLGLIRSNTNVATNLAMPSLKKDDQNWKSISSALASLYVAGKAIGWREYHSDFIDSLSLISLPSYAFDNRNFWMPYTTGGKHQDVQPISTCLHHLVSQDDNGKEQSATFTAVVSQPSLLKMIQGHKLSGITVCPAGVFAEMALTAARYVLTGGSFSAPVPSLSVIDIQIDHPITPQSGSQQVIQVNVRRPKQSRDFAVSIVDQAKPSLITAKCCIRQTDEQDVIATRRQQLDMIRPKISKLMQDAASGIANRFQGKLFYKLFANLMDYGGQYEGVKEAIVGDDFTEALATIRLPKAQDSNESCTLSPYWIDALTHLVGFLLNGNPMNSGDDVYIGTQMERMEILAKDFSPDVVYQSYAYLEPSQDSVNYRGHVYILSGDSIVGFLEGARFRKMPRTTLHRILGKAVPPKPAKETSHPSVEATAPATTNGRSSATNAQAEAPAPPVNGSNGHRKTVESVLIACLIEETGMEESEILPSTFFAEIGVDSLMSISILSEIKNETGVELNASFLMEYPTLGDAQRQLRTLERKREGANPSTNGTDVAVVVNGEKPAKPKRECNVVLMQGQAPEDSSSIPLFLLADGAGSAAAYIHLPKLGLEDDLAVYAVESPWVRDPAEFTCSFEEAAALYLAAVRAKQPRGPYLLGGWSGGGVFSYEVARRLLAAGERVLGLVVIDIRAPSLRPNPHAAAPTMDIIDQIGMLSGIERTFADDASPEAARLKRHMLSTVTCFSRLVPTPMPPHLRPERTFVVWAKKDVLPKAAYDQLPPGLDAWFYPASHDMGPNGWDELVGDAVEYSQVEGDHFSIMTFPEVTELGRVLQAAVAKCRV.

An N-terminal acylcarrier protein transacylase (SAT) domain region spans residues 9 to 245; that stretch reads FLFGDQADAP…AELPAFGAVH (237 aa). Positions 366–794 constitute a Ketosynthase family 3 (KS3) domain; it reads SGSVAVIGMS…GGNSCFVLEE (429 aa). Residues C538, H673, and H713 each act as for beta-ketoacyl synthase activity in the active site. A malonyl-CoA:ACP transacylase (MAT) domain region spans residues 891-1150; that stretch reads AFAFTGQGAH…VKYTQAISHC (260 aa). The For acyl/malonyl transferase activity role is filled by S982. The tract at residues 1263-1392 is N-terminal hotdog fold; that stretch reads HHLVSQDDNG…CCIRQTDEQD (130 aa). Positions 1263 to 1569 constitute a PKS/mFAS DH domain; that stretch reads HHLVSQDDNG…FRKMPRTTLH (307 aa). The product template (PT) domain stretch occupies residues 1267-1568; that stretch reads SQDDNGKEQS…RFRKMPRTTL (302 aa). H1295 functions as the Proton acceptor; for dehydratase activity in the catalytic mechanism. The segment at 1416-1569 is C-terminal hotdog fold; sequence ASGIANRFQG…FRKMPRTTLH (154 aa). Residue D1481 is the Proton donor; for dehydratase activity of the active site. Residues 1573-1621 form a disordered region; that stretch reads GKAVPPKPAKETSHPSVEATAPATTNGRSSATNAQAEAPAPPVNGSNGH. The span at 1594–1607 shows a compositional bias: polar residues; the sequence is PATTNGRSSATNAQ. Positions 1620–1697 constitute a Carrier domain; the sequence is GHRKTVESVL…DAQRQLRTLE (78 aa). Position 1657 is an O-(pantetheine 4'-phosphoryl)serine (S1657). The tract at residues 1725 to 1923 is thioesterase (TE) domain; the sequence is KRECNVVLMQ…ERTFVVWAKK (199 aa).

The protein operates within secondary metabolite biosynthesis; terpenoid biosynthesis. In terms of biological role, non-reducing polyketide synthase; part of the gene cluster that mediates the biosynthesis of the meroterpenoids arthripenoids. The pathway begins with the HR-PKS atnH that catalyzes two chain-extension steps to form a reduced triketide, which then primes the SAT domain in the NR-PKS atnG to initiate three more cycles of extension to give a linear hexaketide corresponding to the polyketide part of arthripenoids. The FAD-dependent monooxygenase atnJ then performs an oxidative decarboxylation at C11 of the atnH/atnG product, via an electrophilic aromatic hydroxylation with concomitant ipso-decarboxylation. The membrane-bound polyprenyl transferase atnF then introduces a farnesyl group before the FAD-dependent monooxygenase atnK functions as the first epoxidase on terminal C12'-C13' olefin, followed by a second epoxidation on C7'-C8' catalyzed by atnA. The terpene cyclase/mutase atnI then initiates the sequential tricyclic ring formation through protonation of the terminal epoxide and catalyzes the regioselective and stereoselective 6/6/6-tricyclic ring formation. The cytochrome P450 monooxygenase atnM is responsible for hydroxylating both C1' and C10'. The next steps may involve ketoreduction and acetyl transfer by the ketoreductase atnB and the acetyltransferase atnC, and lead to the production of arthripenoid B, the final biosynthetic product of the atn cluster. The hydroquinone moiety in arthripenoid B is prone to undergo spontaneous oxidation to afford a benzoquinone compound, a key intermediate for generating structure diversity. For instance, addition of a cysteine followed by ring contraction gives arthripenoid A, tautomerization gives the main product arthripenoid C, addition of a molecular of water or amine affords arthripenoid D or E, respectively, and loss of one water forms arthripenoid F. The polypeptide is Non-reducing polyketide synthase atnG (Arthrinium sp).